The following is a 253-amino-acid chain: Transmembrane protein 69 (253 aa).

Helical transmembrane passes span A104 to V124, V137 to P157, D165 to F185, A192 to P212, and A223 to Y243.

The protein localises to the membrane. The chain is Transmembrane protein 69 (tmem69) from Xenopus tropicalis (Western clawed frog).